A 306-amino-acid chain; its full sequence is MGLAAPRKRTKISHDPNNTNWSRSTSGYGHKIMSSQGWTPGSFLGARNAAHADMFTAASASHIRVVVKDDTLGLGARSKRDPLDEPTGLDAFKGLLGRLNGKSDADLEAEQKKHEDAKIARYAATKWHTVTFISGGLLAQEKLVSLSAQKESPGAQHGSHQNRGGLDMQKSEEDANTSIKDNTLKALREEQVSSVPIAEDTSRSKSKRHRKDEQGKKDKKERKTKKRKHMDEPSPIDSDIPERAILETDLQATVTDSRDTTPPVAKVLSKERRPMGRHLLRGRHIAQKKKALMDDRSLNEIFMVKS.

Over residues 1 to 11 (MGLAAPRKRTK) the composition is skewed to basic residues. Disordered regions lie at residues 1 to 27 (MGLAAPRKRTKISHDPNNTNWSRSTSG) and 148 to 241 (AQKE…SDIP). Over residues 15 to 27 (DPNNTNWSRSTSG) the composition is skewed to polar residues. In terms of domain architecture, G-patch spans 25–79 (TSGYGHKIMSSQGWTPGSFLGARNAAHADMFTAASASHIRVVVKDDTLGLGARSK). Residues 182 to 191 (NTLKALREEQ) show a composition bias toward basic and acidic residues. Basic residues predominate over residues 219 to 228 (KKERKTKKRK).

It belongs to the PINX1 family.

It is found in the nucleus. The protein resides in the nucleolus. Functionally, involved in rRNA-processing at A0, A1 and A2 sites and negatively regulates telomerase. The sequence is that of Protein pxr1 (pxr1) from Aspergillus oryzae (strain ATCC 42149 / RIB 40) (Yellow koji mold).